A 257-amino-acid chain; its full sequence is Probable enoyl-CoA hydratase echA8 (257 aa).

This sequence belongs to the enoyl-CoA hydratase/isomerase family.

It carries out the reaction a (3S)-3-hydroxyacyl-CoA = a (2E)-enoyl-CoA + H2O. It catalyses the reaction a 4-saturated-(3S)-3-hydroxyacyl-CoA = a (3E)-enoyl-CoA + H2O. Its function is as follows. Could possibly oxidize fatty acids using specific components. In Mycobacterium tuberculosis (strain CDC 1551 / Oshkosh), this protein is Probable enoyl-CoA hydratase echA8 (echA8).